The primary structure comprises 190 residues: Potassium-transporting ATPase KdpC subunit (190 aa).

A helical transmembrane segment spans residues 10 to 30; it reads TFIFLLLITGGVYPLLTTALG.

It belongs to the KdpC family. The system is composed of three essential subunits: KdpA, KdpB and KdpC.

Its subcellular location is the cell inner membrane. In terms of biological role, part of the high-affinity ATP-driven potassium transport (or Kdp) system, which catalyzes the hydrolysis of ATP coupled with the electrogenic transport of potassium into the cytoplasm. This subunit acts as a catalytic chaperone that increases the ATP-binding affinity of the ATP-hydrolyzing subunit KdpB by the formation of a transient KdpB/KdpC/ATP ternary complex. This Escherichia coli O157:H7 protein is Potassium-transporting ATPase KdpC subunit.